The sequence spans 140 residues: 3-hydroxyacyl-[acyl-carrier-protein] dehydratase FabZ (140 aa).

His-48 is a catalytic residue.

This sequence belongs to the thioester dehydratase family. FabZ subfamily.

It is found in the cytoplasm. It carries out the reaction a (3R)-hydroxyacyl-[ACP] = a (2E)-enoyl-[ACP] + H2O. Involved in unsaturated fatty acids biosynthesis. Catalyzes the dehydration of short chain beta-hydroxyacyl-ACPs and long chain saturated and unsaturated beta-hydroxyacyl-ACPs. The protein is 3-hydroxyacyl-[acyl-carrier-protein] dehydratase FabZ of Ligilactobacillus salivarius (strain UCC118) (Lactobacillus salivarius).